Reading from the N-terminus, the 218-residue chain is Small ribosomal subunit protein uS3c (218 aa).

One can recognise a KH type-2 domain in the interval 43–118 (IKNYVQKNMR…KLNIAITRIA (76 aa)).

The protein belongs to the universal ribosomal protein uS3 family. Part of the 30S ribosomal subunit.

The protein resides in the plastid. Its subcellular location is the chloroplast. This chain is Small ribosomal subunit protein uS3c (rps3), found in Buxus microphylla (Littleleaf boxwood).